We begin with the raw amino-acid sequence, 351 residues long: Cytosolic sulfotransferase 11 (351 aa).

98–103 (KGGTTW) provides a ligand contact to 3'-phosphoadenylyl sulfate. His-163 acts as the Proton acceptor in catalysis. 3'-phosphoadenylyl sulfate-binding positions include Arg-184, Ser-192, Tyr-250, and 316 to 318 (RKG).

It belongs to the sulfotransferase 1 family.

Its subcellular location is the cytoplasm. Sulfotransferase that utilizes 3'-phospho-5'-adenylyl sulfate (PAPS) as sulfonate donor. This Arabidopsis thaliana (Mouse-ear cress) protein is Cytosolic sulfotransferase 11 (SOT11).